A 202-amino-acid polypeptide reads, in one-letter code: P25 protein (202 aa).

Residues 7-195 form the Flavodoxin-like domain; it reads VAIVIYSTYG…EIARIQGETF (189 aa). Phosphoserine is present on serine 181.

It belongs to the WrbA family. Homodimer.

In terms of biological role, unknown. Target of pap1 transcription factor. Confers brefeldin A resistance in S.pombe. This is P25 protein (obr1) from Schizosaccharomyces pombe (strain 972 / ATCC 24843) (Fission yeast).